A 148-amino-acid polypeptide reads, in one-letter code: Large ribosomal subunit protein bL9 (148 aa).

The protein belongs to the bacterial ribosomal protein bL9 family.

In terms of biological role, binds to the 23S rRNA. In Campylobacter concisus (strain 13826), this protein is Large ribosomal subunit protein bL9.